The following is a 393-amino-acid chain: Na(+)/H(+) antiporter NhaA (393 aa).

Helical transmembrane passes span 23–43 (AGGITLMAAAALALIVANSPF), 58–78 (LSLAHWINDALMAIFFLLVGL), 96–116 (MLPGIAAAGGVILPAIIFAVL), 126–146 (GWAVPSATDIAFALGVLSLLG), 155–175 (VFLATLAILDDLAAVVIIAIF), 178–198 (AEISMPYLGAAFITAAVLFVM), 201–221 (MGVVKLLPYLISAVILWFFVF), 224–244 (GVHATVAGVVAALMIPLKPAP), 265–285 (VAFIVVPIFGFANAGISFKGL), 298–318 (ILLGLFLGKQFGVFGAAWLAI), 334–354 (LYGVAILCGIGFTMSIFIGLL), and 367–387 (IGVLSGSALSAICGYLLLRAA).

The protein belongs to the NhaA Na(+)/H(+) (TC 2.A.33) antiporter family.

It localises to the cell inner membrane. The enzyme catalyses Na(+)(in) + 2 H(+)(out) = Na(+)(out) + 2 H(+)(in). Functionally, na(+)/H(+) antiporter that extrudes sodium in exchange for external protons. This Brucella canis (strain ATCC 23365 / NCTC 10854 / RM-666) protein is Na(+)/H(+) antiporter NhaA.